The primary structure comprises 129 residues: uncharacterized protein (129 aa).

A helical membrane pass occupies residues 5–25 (IIGLTLAFFVLFLTAVAILFT).

It is found in the membrane. This is an uncharacterized protein from Mycoplasma pneumoniae (strain ATCC 29342 / M129 / Subtype 1) (Mycoplasmoides pneumoniae).